The primary structure comprises 588 residues: Proteasome-associated ATPase (588 aa).

A compositionally biased stretch (basic and acidic residues) spans 1-10 (MAAHDDDMNR). The tract at residues 1–23 (MAAHDDDMNRGIRPGRGSDDPAG) is disordered. The stretch at 47–94 (RILEERIVELQTNLAGVSAQNERLANTLREARDQIVALKEEVDRLAQP) forms a coiled coil. An ATP-binding site is contributed by 276–281 (GCGKTL). Residues 587–588 (YL) form a docks into pockets in the proteasome alpha-ring region.

The protein belongs to the AAA ATPase family. Homohexamer. Assembles into a hexameric ring structure that caps the 20S proteasome core. Strongly interacts with the prokaryotic ubiquitin-like protein Pup through a hydrophobic interface; the interacting region of ARC lies in its N-terminal coiled-coil domain. There is one Pup binding site per ARC hexamer ring. Upon ATP-binding, the C-terminus of ARC interacts with the alpha-rings of the proteasome core, possibly by binding to the intersubunit pockets.

It functions in the pathway protein degradation; proteasomal Pup-dependent pathway. Functionally, ATPase which is responsible for recognizing, binding, unfolding and translocation of pupylated proteins into the bacterial 20S proteasome core particle. May be essential for opening the gate of the 20S proteasome via an interaction with its C-terminus, thereby allowing substrate entry and access to the site of proteolysis. Thus, the C-termini of the proteasomal ATPase may function like a 'key in a lock' to induce gate opening and therefore regulate proteolysis. In Streptomyces avermitilis (strain ATCC 31267 / DSM 46492 / JCM 5070 / NBRC 14893 / NCIMB 12804 / NRRL 8165 / MA-4680), this protein is Proteasome-associated ATPase.